A 152-amino-acid polypeptide reads, in one-letter code: Sorting nexin-3 (152 aa).

The PX domain maps to 30 to 147 (NFLEIEVRSP…CAFIQDPQWD (118 aa)). A 1,2-diacyl-sn-glycero-3-phospho-(1D-myo-inositol-3-phosphate) is bound by residues R73, S75, K99, R104, and R113.

It belongs to the sorting nexin family.

It is found in the cytoplasm. The protein localises to the golgi apparatus membrane. Its subcellular location is the prevacuolar compartment membrane. In terms of biological role, required for retention of late Golgi membrane proteins. Component of the retrieval machinery that functions by direct interaction with the cytosolic tails of certain TGN membrane proteins during the sorting/budding process at the prevacuolar compartment. Binds phosphatidylinositol 3-phosphate (PtdIns(P3)). In Yarrowia lipolytica (strain CLIB 122 / E 150) (Yeast), this protein is Sorting nexin-3 (SNX3).